The chain runs to 347 residues: N6-Methyl-AMP deaminase-L (347 aa).

Residues histidine 19 and histidine 21 each contribute to the Zn(2+) site. Residues histidine 21, asparagine 23, histidine 69, 101-104 (STPR), aspartate 142, and glycine 175 each bind N(6)-methyl-AMP. Histidine 202 serves as a coordination point for Zn(2+). N(6)-methyl-AMP-binding residues include glutamate 205, aspartate 283, and aspartate 284. The active-site Proton donor is the glutamate 205. Aspartate 283 contributes to the Zn(2+) binding site.

Belongs to the metallo-dependent hydrolases superfamily. Adenosine and AMP deaminases family. In terms of assembly, monomer. The cofactor is Zn(2+).

It carries out the reaction N(6)-methyl-AMP + H2O + H(+) = IMP + methylamine. Functionally, catalyzes the hydrolysis of the free cytosolic methylated adenosine nucleotide N(6)-methyl-AMP (N6-mAMP) to produce inositol monophosphate (IMP) and methylamine. Is required for the catabolism of cytosolic N6-mAMP, which is derived from the degradation of mRNA containing N6-methylated adenine (m6A). This is N6-Methyl-AMP deaminase-L (mapda.L) from Xenopus laevis (African clawed frog).